The chain runs to 477 residues: Bifunctional protein HldE (477 aa).

Residues 1–318 (MKVTLPEFER…ENAVRGRADT (318 aa)) form a ribokinase region. Position 179 is an N6-acetyllysine (Lys-179). 195–198 (NLSE) lines the ATP pocket. Asp-264 is a catalytic residue. A cytidylyltransferase region spans residues 344-477 (MTNGVFDILH…IKKIQQDKKG (134 aa)).

It in the N-terminal section; belongs to the carbohydrate kinase PfkB family. The protein in the C-terminal section; belongs to the cytidylyltransferase family. In terms of assembly, homodimer.

The enzyme catalyses D-glycero-beta-D-manno-heptose 7-phosphate + ATP = D-glycero-beta-D-manno-heptose 1,7-bisphosphate + ADP + H(+). It carries out the reaction D-glycero-beta-D-manno-heptose 1-phosphate + ATP + H(+) = ADP-D-glycero-beta-D-manno-heptose + diphosphate. It participates in nucleotide-sugar biosynthesis; ADP-L-glycero-beta-D-manno-heptose biosynthesis; ADP-L-glycero-beta-D-manno-heptose from D-glycero-beta-D-manno-heptose 7-phosphate: step 1/4. The protein operates within nucleotide-sugar biosynthesis; ADP-L-glycero-beta-D-manno-heptose biosynthesis; ADP-L-glycero-beta-D-manno-heptose from D-glycero-beta-D-manno-heptose 7-phosphate: step 3/4. Catalyzes the phosphorylation of D-glycero-D-manno-heptose 7-phosphate at the C-1 position to selectively form D-glycero-beta-D-manno-heptose-1,7-bisphosphate. In terms of biological role, catalyzes the ADP transfer from ATP to D-glycero-beta-D-manno-heptose 1-phosphate, yielding ADP-D-glycero-beta-D-manno-heptose. This chain is Bifunctional protein HldE, found in Shigella flexneri serotype 5b (strain 8401).